The sequence spans 543 residues: Glucose transporter HT1 (543 aa).

The tract at residues 1–24 (MPEYPTEDTNASGKTSGSSPDDHT) is disordered. Residues 1 to 38 (MPEYPTEDTNASGKTSGSSPDDHTDDNAPSFFSCENLC) lie on the Cytoplasmic side of the membrane. Polar residues predominate over residues 7-19 (EDTNASGKTSGSS). The helical transmembrane segment at 39–59 (IVQVPVSTGSLNGFSIGFVAV) threads the bilayer. Topologically, residues 60–120 (YMHLYEIFSG…GSGYNSLESG (61 aa)) are extracellular. N-linked (GlcNAc...) asparagine glycans are attached at residues Asn-90 and Asn-91. A helical transmembrane segment spans residues 121–141 (LFACSMIVGSMIGSIFAGKFL). At 142-147 (SKFGLK) the chain is on the cytoplasmic side. Residues 148–168 (MSFIVSGVLGIVGSALIHVAT) traverse the membrane as a helical segment. Over 169–172 (RGST) the chain is Extracellular. The helical transmembrane segment at 173–193 (LWVMCVGRFLMGLVLGLVCVA) threads the bilayer. Topologically, residues 194–212 (SPMYVNENAHPKYRKTIGV) are cytoplasmic. Residues 213–233 (LFQVFTTFGIMFAALLGLAIV) form a helical membrane-spanning segment. The Extracellular portion of the chain corresponds to 234–248 (KTPGHDKASGLLWRM). The helical transmembrane segment at 249 to 269 (QVFCSVSTALSALLLVLGLVV) threads the bilayer. At 270–300 (RKSKTSFAGGVDSAGEGVLDPNEYSVRQMLG) the chain is on the cytoplasmic side. Residues 301–321 (PLAVGAVTAGTLQLTGINAVM) traverse the membrane as a helical segment. Over 322-337 (NYAPEIMRNIGMDPME) the chain is Extracellular. The chain crosses the membrane as a helical span at residues 338–358 (GNSAVMSWNFVTALVAIPLVS). The Cytoplasmic portion of the chain corresponds to 359–364 (RFTMRQ). A helical membrane pass occupies residues 365–385 (LFLACSFMASCACLIMCGIPV). Topologically, residues 386–400 (YPGVASVDNRNIVAT) are extracellular. Residues 401–421 (VGIAVFIAAFEFGVGSCFFVL) traverse the membrane as a helical segment. Topologically, residues 422 to 436 (AQDLFPRSFRPTGSS) are cytoplasmic. Residues 437–457 (FVVMAQFIFNIMINLLYPITV) traverse the membrane as a helical segment. At 458–470 (EAISGGKGKSPEK) the chain is on the extracellular side. Residues 471-491 (GQSVSFIIFGIIGIICFVLQL) form a helical membrane-spanning segment. Topologically, residues 492 to 543 (RYLTPWEDGQGTSTSPTARCNAPTSPNNGEGEPATADMSPVEMSTPKHSGAA) are cytoplasmic. Residues 503-519 (TSTSPTARCNAPTSPNN) show a composition bias toward polar residues. A disordered region spans residues 503–543 (TSTSPTARCNAPTSPNNGEGEPATADMSPVEMSTPKHSGAA).

The protein belongs to the major facilitator superfamily. Sugar transporter (TC 2.A.1.1) family.

The protein localises to the membrane. Facilitative glucose transporter. Binds D-fructose and cytochalasin-B, but not D-galactose. The polypeptide is Glucose transporter HT1 (HT1) (Trypanosoma vivax (Duttonella vivax)).